The primary structure comprises 469 residues: Ribosomal protein uS12 methylthiotransferase RimO (469 aa).

One can recognise an MTTase N-terminal domain in the interval 3–119 (TRVYMHTLGC…VARIVSDAQA (117 aa)). 6 residues coordinate [4Fe-4S] cluster: cysteine 12, cysteine 48, cysteine 82, cysteine 154, cysteine 158, and cysteine 161. Residues 140–370 (SLPSHTAYLK…MAVQQAISRA (231 aa)) enclose the Radical SAM core domain. In terms of domain architecture, TRAM spans 373 to 441 (QAMIGRRVEV…EYDLVGRVVA (69 aa)). The interval 444–469 (PSRAARPLPAAPRAAPARKGGLNVLR) is disordered. Residues 447-461 (AARPLPAAPRAAPAR) are compositionally biased toward low complexity.

Belongs to the methylthiotransferase family. RimO subfamily. [4Fe-4S] cluster is required as a cofactor.

It localises to the cytoplasm. It catalyses the reaction L-aspartate(89)-[ribosomal protein uS12]-hydrogen + (sulfur carrier)-SH + AH2 + 2 S-adenosyl-L-methionine = 3-methylsulfanyl-L-aspartate(89)-[ribosomal protein uS12]-hydrogen + (sulfur carrier)-H + 5'-deoxyadenosine + L-methionine + A + S-adenosyl-L-homocysteine + 2 H(+). Catalyzes the methylthiolation of an aspartic acid residue of ribosomal protein uS12. This Anaeromyxobacter sp. (strain K) protein is Ribosomal protein uS12 methylthiotransferase RimO.